The following is a 63-amino-acid chain: Lantibiotic mutacin-1140 (63 aa).

A propeptide spanning residues 1–41 (MSNTQLLEVLGTETFDVQEDLFAFDTTDTTIVASNDDPDTR) is cleaved from the precursor. A cross-link (lanthionine (Ser-Cys)) is located at residues 44-48 (SWSLC). Serine 46 is subject to 2,3-didehydroalanine (Ser). The segment at residues 49–52 (TPGC) is a cross-link (beta-methyllanthionine (Thr-Cys)). At threonine 55 the chain carries 2,3-didehydrobutyrine. Residues 57–62 (SFNSYC) constitute a cross-link (lanthionine (Ser-Cys)). The S-(2-aminovinyl)-D-cysteine (Ser-Cys) cross-link spans 60–63 (SYCC).

Belongs to the type A lantibiotic family. Post-translationally, maturation of lantibiotics involves the enzymatic conversion of Thr, and Ser into dehydrated AA and the formation of thioether bonds with cysteine. The C-terminal lanthionine undergoes decarboxylation. This is followed by membrane translocation and cleavage of the modified precursor. In terms of processing, the structure of the 2,3-didehydrobutyrine is not discussed in PubMed:11082191.

Lanthionine-containing peptide antibiotic (lantibiotic) active on Gram-positive bacteria. The bactericidal activity of lantibiotics is based on depolarization of energized bacterial cytoplasmic membranes, initiated by the formation of aqueous transmembrane pores. This chain is Lantibiotic mutacin-1140 (lanA), found in Streptococcus mutans.